The following is a 264-amino-acid chain: NFAT activation molecule 1 (264 aa).

A signal peptide spans 1 to 37 (MESWLLRRGARVRCLHPPSWLPAWCFLCLLPVPQTLQ). Residues 38–159 (LTGLVSLTHT…QPPAFKVQEA (122 aa)) are Extracellular-facing. One can recognise an Ig-like V-type domain in the interval 49-145 (LPIMVSLANT…QSDGVVILVR (97 aa)). Residues C64 and C110 are joined by a disulfide bond. N-linked (GlcNAc...) asparagine glycosylation is found at N105 and N118. The helical transmembrane segment at 160 to 180 (LMLGFTSLMSVLGVLGTALLL) threads the bilayer. Over 181 to 264 (WKKKQISVLG…NEFNLVYENL (84 aa)) the chain is Cytoplasmic. The 21-residue stretch at 212 to 232 (ESVYTSLQRRETEVYACMKEE) folds into the ITAM domain. 2 positions are modified to phosphotyrosine: Y215 and Y226.

No direct interaction with the B-cell antigen receptor (BCR). Interacts with SYK; probably involved in BCR signaling. Interacts with ZAP70. Post-translationally, N-glycosylated. Highly expressed in the spleen, expressed by both B- and CD4+ and CD8+ T-cells, as well as non-T- and non-B-cells, including macrophages and neutrophils. Expressed at low levels, if any, in non-immune tissue.

The protein localises to the cell membrane. In terms of biological role, may function in immune system as a receptor which activates via the calcineurin/NFAT-signaling pathway the downstream cytokine gene promoters. Activates the transcription of IL-13 and TNF-alpha promoters. May be involved in the regulation of B-cell, but not T-cell, development. The protein is NFAT activation molecule 1 (Nfam1) of Mus musculus (Mouse).